We begin with the raw amino-acid sequence, 877 residues long: Bifunctional uridylyltransferase/uridylyl-removing enzyme (877 aa).

Positions 1 to 335 (MDGPNSDRAH…HRDDAFSPTP (335 aa)) are uridylyltransferase. The segment at 336-695 (VNDHFQAVND…LRPESLRGSV (360 aa)) is uridylyl-removing. In terms of domain architecture, HD spans 454 to 576 (VDEHTLFVVR…VRNQNTLNHL (123 aa)). ACT domains lie at 696-778 (EVFI…AVSR) and 805-877 (ILEL…VGDQ).

It belongs to the GlnD family. Mg(2+) is required as a cofactor.

It carries out the reaction [protein-PII]-L-tyrosine + UTP = [protein-PII]-uridylyl-L-tyrosine + diphosphate. The catalysed reaction is [protein-PII]-uridylyl-L-tyrosine + H2O = [protein-PII]-L-tyrosine + UMP + H(+). Its activity is regulated as follows. Uridylyltransferase (UTase) activity is inhibited by glutamine, while glutamine activates uridylyl-removing (UR) activity. In terms of biological role, modifies, by uridylylation and deuridylylation, the PII regulatory proteins (GlnB and homologs), in response to the nitrogen status of the cell that GlnD senses through the glutamine level. Under low glutamine levels, catalyzes the conversion of the PII proteins and UTP to PII-UMP and PPi, while under higher glutamine levels, GlnD hydrolyzes PII-UMP to PII and UMP (deuridylylation). Thus, controls uridylylation state and activity of the PII proteins, and plays an important role in the regulation of nitrogen fixation and metabolism. The protein is Bifunctional uridylyltransferase/uridylyl-removing enzyme of Methylococcus capsulatus (strain ATCC 33009 / NCIMB 11132 / Bath).